We begin with the raw amino-acid sequence, 92 residues long: Putative septation protein SpoVG (92 aa).

This sequence belongs to the SpoVG family.

Could be involved in septation. This is Putative septation protein SpoVG from Thermoanaerobacter sp. (strain X514).